The primary structure comprises 578 residues: 2-succinyl-5-enolpyruvyl-6-hydroxy-3-cyclohexene-1-carboxylate synthase (578 aa).

The protein belongs to the TPP enzyme family. MenD subfamily. In terms of assembly, homodimer. Requires Mg(2+) as cofactor. The cofactor is Mn(2+). Thiamine diphosphate is required as a cofactor.

The catalysed reaction is isochorismate + 2-oxoglutarate + H(+) = 5-enolpyruvoyl-6-hydroxy-2-succinyl-cyclohex-3-ene-1-carboxylate + CO2. It participates in quinol/quinone metabolism; 1,4-dihydroxy-2-naphthoate biosynthesis; 1,4-dihydroxy-2-naphthoate from chorismate: step 2/7. The protein operates within quinol/quinone metabolism; menaquinone biosynthesis. In terms of biological role, catalyzes the thiamine diphosphate-dependent decarboxylation of 2-oxoglutarate and the subsequent addition of the resulting succinic semialdehyde-thiamine pyrophosphate anion to isochorismate to yield 2-succinyl-5-enolpyruvyl-6-hydroxy-3-cyclohexene-1-carboxylate (SEPHCHC). In Bacillus velezensis (strain DSM 23117 / BGSC 10A6 / LMG 26770 / FZB42) (Bacillus amyloliquefaciens subsp. plantarum), this protein is 2-succinyl-5-enolpyruvyl-6-hydroxy-3-cyclohexene-1-carboxylate synthase.